The following is a 153-amino-acid chain: 3-hydroxyacyl-[acyl-carrier-protein] dehydratase FabZ (153 aa).

Residue His-57 is part of the active site.

It belongs to the thioester dehydratase family. FabZ subfamily.

It is found in the cytoplasm. It carries out the reaction a (3R)-hydroxyacyl-[ACP] = a (2E)-enoyl-[ACP] + H2O. Functionally, involved in unsaturated fatty acids biosynthesis. Catalyzes the dehydration of short chain beta-hydroxyacyl-ACPs and long chain saturated and unsaturated beta-hydroxyacyl-ACPs. In Vibrio cholerae serotype O1 (strain ATCC 39315 / El Tor Inaba N16961), this protein is 3-hydroxyacyl-[acyl-carrier-protein] dehydratase FabZ.